The chain runs to 493 residues: Chitinase 1 (493 aa).

The first 20 residues, Met-1–Ala-20, serve as a signal peptide directing secretion. A GH18 domain is found at Val-27–Ala-318. The Proton donor role is filled by Glu-164.

Belongs to the glycosyl hydrolase 18 family. Chitinase class III subfamily.

The enzyme catalyses Random endo-hydrolysis of N-acetyl-beta-D-glucosaminide (1-&gt;4)-beta-linkages in chitin and chitodextrins.. This is Chitinase 1 (CHI1) from Rhizopus niveus.